The chain runs to 122 residues: MIQSQTHLNVADNSGARELMCIRIIGTSNRRYAHIGDVIIAVIKEAVPNSPLERSEVIRAVIVRTSKELKRDNGMIIRYDDNAAVVIDQEGNPKGTRIFGAIARELRQLNFTKIVSLAPEVL.

It belongs to the universal ribosomal protein uL14 family. In terms of assembly, part of the 50S ribosomal subunit.

The protein resides in the plastid. Its subcellular location is the chloroplast. In terms of biological role, binds to 23S rRNA. This chain is Large ribosomal subunit protein uL14c, found in Populus alba (White poplar).